Reading from the N-terminus, the 478-residue chain is Nuclear distribution protein PAC1 (478 aa).

Positions 9 to 41 (QAEELHKAMIAYLLSANLPKSAAALREELADSV) constitute a LisH domain. Positions 60 to 87 (TSVVRLQKKIMDLESRNNALQSELDSAT) form a coiled coil. WD repeat units lie at residues 113-154 (SHRE…RTIK), 156-196 (HTKA…KNIR), 200-247 (GHDH…CVKT), 250-289 (GHVDWVRDVAASPDGRFLFSAGNDQVARLWDVSSGETKST), 292-352 (GHEH…IKTL), 354-393 (GHDNWVRALAFHPGGKYLLSVSDDKTLRCWDLTQECKCVR), 398-439 (AHGH…AASA), and 440-477 (INGVVPTGKKEDPGGGPMMGIRCVIATGSVDLKVRVFA).

It belongs to the WD repeat LIS1/nudF family. In terms of assembly, self-associates. Interacts with NDL1 and dynein.

Its subcellular location is the cytoplasm. The protein localises to the cytoskeleton. The protein resides in the spindle pole. In terms of biological role, positively regulates the activity of the minus-end directed microtubule motor protein dynein. May enhance dynein-mediated microtubule sliding by targeting dynein to the microtubule plus end. Required for nuclear migration during vegetative growth as well as development. Required for retrograde early endosome (EE) transport from the hyphal tip. Required for localization of dynein to the mitotic spindle poles. Recruits additional proteins to the dynein complex at SPBs. The sequence is that of Nuclear distribution protein PAC1 from Paracoccidioides brasiliensis (strain Pb18).